A 1278-amino-acid chain; its full sequence is MTRRCMPARPGFPSSPAPGSSPPRCHLRPGSTAPAAAGKRTESPGDRKQSIIDFFKPAAKQDKHMLDSPQKSNIKYRGNGLSITGTEQFERKLSSPKKLKPKRMSSEESPILEAFMKGGKEHHKDRGVHESRRPCMSLSKYLPKGAGIYAPSSYRLPKEIKAQKKKHQSPERRKSLFIHESNREKNDRDRGKNSEDSRKQATATEGDIFKHSSRSISSRSSLSRHHPGESTLGARFQLSLASYWREREQKKLRKEQMEQRINSENSFSEASNLSLKSSGVGKNCKPRHEHSKHTEAVPGKSNLSTLENGHLSRKRSSSDSWELSGSKQNKFSDKRTEELCGLRPEKHKRTYHTKSKRVLSREAPRHIPSERKVYQTHCTEDSWWCSALGRHSQGAGKTVSRGMSIASTLRLYLGRVISQLWKMDISQEKDHLQTRGNFQALNRINSPTKEQRNSVDSDLKSTKEPIIPKARESFLEKRPDTSHQREKFIRHIALKTPGGVLRLEDIAKEPEDETDRSSADSAPSNAGHHSSRNSDQVHSASTKETKIQKPHLPLPQEKSTIKRASNLQKNKPAGSVTSKETKLPLLSHVPSAVSSRVPLNAKNCTLPVPKKDKERSSSKERSGHSTESSKHKEHRAKTIKAVSNESSGKNSGGSLHSEYAPPTASPPAALEVVPSVPSPAAPSDKESSGNSNAGSNALKRKFRGDFDSDEESLGYTLESDEEEETLKSLEEIMALNFSRTPTTSGKPPAVSKGLRSQSSDMKEYAQSGTYTNTLERLVKEMEDTQRLDELQKKLQEDIRQGRGIKSPLRTGDQDSTDDGDGLLEEHREFLKKFSVTVDAIPDHHPGEEIFNFLNSGKIFNQYTLDLRDSGFIGESAVEKLILKSGKTDQIFLTTQGFLTTAYHYVQCPVPVLKWLFRMMSVHTDCIVSVQILSTLMEITIRNDTFSDSPVWPWIPSLSDIAAVFFNMGVGFGSLFPLETLQPDFNEENLISETQKTLGGKESEDSPYSPVFSALPETNILNVVKFLGLCTSIHPEGYQDGELMLLILMLFKMSLEKELKQIPLVDFQSLLINLMKNIRDWNTKVHELCLGINELSSHPHNLLWLVQLVPNWTSRGRQLRQCLSLVMMSKLLDEKHEDIPNANNLQISVLHRYLVQMKPSDLLKKMVLKKRAEQPNETIDDSLHLELEKQAYYLTYILLHLVGEVSCSHSLSSGQRKHFVLLCGALEKHVKCDIREDARLFYRTKVKDLVARIHGKWQEIIQNCRPTQGQLHDFWVPDS.

Disordered stretches follow at residues 1–235 (MTRR…LGAR), 248–337 (EQKK…KRTE), 443–491 (RINS…FIRH), and 509–582 (EPED…KETK). Over residues 39–50 (KRTESPGDRKQS) the composition is skewed to basic and acidic residues. Over residues 94 to 103 (SSPKKLKPKR) the composition is skewed to basic residues. Composition is skewed to basic and acidic residues over residues 118–133 (GGKE…ESRR), 156–174 (LPKE…ERRK), 180–199 (ESNR…DSRK), and 248–258 (EQKKLRKEQME). Composition is skewed to polar residues over residues 259-277 (QRIN…SLKS) and 318-329 (SDSWELSGSKQN). Composition is skewed to basic and acidic residues over residues 449–463 (KEQR…KSTK) and 469–489 (KARE…EKFI). A compositionally biased stretch (polar residues) spans 519–540 (ADSAPSNAGHHSSRNSDQVHSA). Ser-591 is subject to Phosphoserine. Disordered stretches follow at residues 598 to 724 (PLNA…EEEE), 739 to 764 (RTPT…MKEY), and 798 to 820 (IRQG…DDGD). The segment covering 609-630 (PKKDKERSSSKERSGHSTESSK) has biased composition (basic and acidic residues). Composition is skewed to low complexity over residues 643-654 (SNESSGKNSGGS), 666-675 (PPAALEVVPS), and 688-697 (SGNSNAGSNA). A compositionally biased stretch (acidic residues) spans 707 to 724 (DSDEESLGYTLESDEEEE). Phosphoserine is present on residues Ser-708, Ser-712, and Ser-719. An interaction with SIMC1 region spans residues 740-1278 (TPTTSGKPPA…QLHDFWVPDS (539 aa)). Positions 769 to 1271 (TYTNTLERLV…NCRPTQGQLH (503 aa)) are NSE6-like domain. Residues 807–1278 (PLRTGDQDST…QLHDFWVPDS (472 aa)) form a required for interaction with SLF1 and RAD18 region.

It belongs to the FAM178 family. Forms a heterodimer with SIMC1. Interacts with SLF1 (via N-terminus); this interaction links RAD18 to the SMC5-SMC6 complex. Interacts with RAD18; this interaction is increased in a SLF1-dependent manner. Interacts with SMC5 and SMC6.

Its subcellular location is the nucleus. The protein localises to the PML body. Functionally, plays a role in the DNA damage response (DDR) pathway by regulating postreplication repair of UV-damaged DNA and genomic stability maintenance. The SLF1-SLF2 complex acts to link RAD18 with the SMC5-SMC6 complex at replication-coupled interstrand cross-links (ICL) and DNA double-strand breaks (DSBs) sites on chromatin during DNA repair in response to stalled replication forks. Promotes the recruitment of the SMC5-SMC6 complex to DNA lesions. May play a role in SMC5-SMC6 complex recruitment for viral restriction. Forms a complex with SIMC1 and this complex is required to recruit SMC5-SMC6 complex to PML nuclear bodies and sites of viral replication. In Mus musculus (Mouse), this protein is SMC5-SMC6 complex localization factor protein 2.